Reading from the N-terminus, the 391-residue chain is Carbamoyl phosphate synthase small chain (391 aa).

Residues 1–202 (MTQPAILVLE…AHASAGSGEE (202 aa)) are CPSase. L-glutamine is bound by residues serine 47, glycine 254, and glycine 256. The 186-residue stretch at 206-391 (KVVAYDYGVK…RFVDLMAARA (186 aa)) folds into the Glutamine amidotransferase type-1 domain. Catalysis depends on cysteine 282, which acts as the Nucleophile. Residues leucine 283, glutamine 286, asparagine 324, glycine 326, and phenylalanine 327 each coordinate L-glutamine. Residues histidine 366 and glutamate 368 contribute to the active site.

It belongs to the CarA family. As to quaternary structure, composed of two chains; the small (or glutamine) chain promotes the hydrolysis of glutamine to ammonia, which is used by the large (or ammonia) chain to synthesize carbamoyl phosphate. Tetramer of heterodimers (alpha,beta)4.

It carries out the reaction hydrogencarbonate + L-glutamine + 2 ATP + H2O = carbamoyl phosphate + L-glutamate + 2 ADP + phosphate + 2 H(+). The catalysed reaction is L-glutamine + H2O = L-glutamate + NH4(+). The protein operates within amino-acid biosynthesis; L-arginine biosynthesis; carbamoyl phosphate from bicarbonate: step 1/1. It participates in pyrimidine metabolism; UMP biosynthesis via de novo pathway; (S)-dihydroorotate from bicarbonate: step 1/3. In terms of biological role, small subunit of the glutamine-dependent carbamoyl phosphate synthetase (CPSase). CPSase catalyzes the formation of carbamoyl phosphate from the ammonia moiety of glutamine, carbonate, and phosphate donated by ATP, constituting the first step of 2 biosynthetic pathways, one leading to arginine and/or urea and the other to pyrimidine nucleotides. The small subunit (glutamine amidotransferase) binds and cleaves glutamine to supply the large subunit with the substrate ammonia. In Xanthomonas axonopodis pv. citri (strain 306), this protein is Carbamoyl phosphate synthase small chain.